The primary structure comprises 385 residues: U6 small nuclear RNA (adenine-(43)-N(6))-methyltransferase (385 aa).

Residues Arg-54, Gly-83, Glu-106, and Asn-155 each contribute to the S-adenosyl-L-methionine site.

It belongs to the methyltransferase superfamily. METTL16/RlmF family.

It is found in the cytoplasm. The protein resides in the nucleus. It carries out the reaction adenosine in U6 snRNA + S-adenosyl-L-methionine = N(6)-methyladenosine in U6 snRNA + S-adenosyl-L-homocysteine + H(+). Functionally, RNA N6-methyltransferase that mediates N6-methylation of adenine of U6 small nuclear RNA (U6 snRNA). The chain is U6 small nuclear RNA (adenine-(43)-N(6))-methyltransferase from Schizosaccharomyces pombe (strain 972 / ATCC 24843) (Fission yeast).